We begin with the raw amino-acid sequence, 88 residues long: Putative defensin-like protein 264 (88 aa).

The N-terminal stretch at M1–A26 is a signal peptide. 3 disulfide bridges follow: C47/C65, C53/C70, and C57/C72.

Belongs to the DEFL family.

Its subcellular location is the secreted. The polypeptide is Putative defensin-like protein 264 (Arabidopsis thaliana (Mouse-ear cress)).